A 373-amino-acid chain; its full sequence is MRWIEEELKRIKEANLYRERILLEGVKDFCSNDYLGLRKHPEVVEESIRVLKEAGLGSGASQLVSGYTKHHRELEEKLAEFKGTESCVLFGSGFLANVGTIPALVEEGDLVLSDELNHASIIDGVRLSKAQKRVFKHKDYEELEEFLKKNRKKFRRVLIITDTVFSMDGDVADLKRLTQICEEYDCMLYIDEAHTTGTIGKGGLDYFGIEHKEYIIVMGTLSKALGSYGAFVCGTKLLIDYLVNKARSLIFSTSLPPSVCAGAKKAIEIIEENPKLIEFLRKKEKEILEILEQFSLDYKYYSTPIIPIMVYDEKETVRIKEELLKEGVFIQAIRYPTVPKGKARLRLTASLNYTRKDLEFLKNALEKVLKGRA.

A substrate-binding site is contributed by Arg18. 93 to 94 (GF) is a binding site for pyridoxal 5'-phosphate. His118 provides a ligand contact to substrate. Pyridoxal 5'-phosphate-binding positions include Ser166, 191–194 (DEAH), and 220–223 (TLSK). The residue at position 223 (Lys223) is an N6-(pyridoxal phosphate)lysine. Thr337 is a binding site for substrate.

The protein belongs to the class-II pyridoxal-phosphate-dependent aminotransferase family. BioF subfamily. As to quaternary structure, homodimer. It depends on pyridoxal 5'-phosphate as a cofactor.

It catalyses the reaction 6-carboxyhexanoyl-[ACP] + L-alanine + H(+) = (8S)-8-amino-7-oxononanoate + holo-[ACP] + CO2. Its pathway is cofactor biosynthesis; biotin biosynthesis. Its function is as follows. Catalyzes the decarboxylative condensation of pimeloyl-[acyl-carrier protein] and L-alanine to produce 8-amino-7-oxononanoate (AON), [acyl-carrier protein], and carbon dioxide. This chain is Putative 8-amino-7-oxononanoate synthase (bioF), found in Aquifex aeolicus (strain VF5).